The sequence spans 507 residues: Glutamate--tRNA ligase (507 aa).

The 'HIGH' region motif lies at 14 to 24; sequence PSPTGYLHIGG. The 'KMSKS' region motif lies at 261-265; the sequence is KLSKR. Lys264 serves as a coordination point for ATP.

This sequence belongs to the class-I aminoacyl-tRNA synthetase family. Glutamate--tRNA ligase type 1 subfamily. Monomer.

The protein resides in the cytoplasm. The catalysed reaction is tRNA(Glu) + L-glutamate + ATP = L-glutamyl-tRNA(Glu) + AMP + diphosphate. In terms of biological role, catalyzes the attachment of glutamate to tRNA(Glu) in a two-step reaction: glutamate is first activated by ATP to form Glu-AMP and then transferred to the acceptor end of tRNA(Glu). The sequence is that of Glutamate--tRNA ligase from Roseiflexus castenholzii (strain DSM 13941 / HLO8).